The primary structure comprises 148 residues: Cytochrome c oxidase subunit 6, mitochondrial (148 aa).

The transit peptide at 1 to 40 (MASFFRTAVRGPSAGLFRAVARPQPIAARVSLFSTSSRFR) directs the protein to the mitochondrion.

It belongs to the cytochrome c oxidase subunit 5A family. In terms of assembly, component of the cytochrome c oxidase (complex IV, CIV), a multisubunit enzyme composed of 11 subunits. The complex is composed of a catalytic core of 3 subunits Cox1, Cox2 and Cox3, encoded in the mitochondrial DNA, and 8 supernumerary subunits Cox4, Cox5a/Cox5, Cox6, Cox7, Cox8, Cox7a/Cox9, Cox6b/Cox12 and Cox6a/Cox13, which are encoded in the nuclear genome. The complex exists as a monomer or a dimer and forms respiratory supercomplexes (SCs) in the inner mitochondrial membrane with NADH-ubiquinone oxidoreductase (complex I, CI) and ubiquinol-cytochrome c oxidoreductase (cytochrome b-c1 complex, complex III, CIII), resulting in various different assemblies (supercomplexes I(1)IV(1), I(1)III(3)IV(2), III(2)IV(1) and III(2)IV(2) as well as larger supercomplexes of compositions like I(1)III(2)IV(5-6)).

Its subcellular location is the mitochondrion inner membrane. Its pathway is energy metabolism; oxidative phosphorylation. Its function is as follows. Component of the cytochrome c oxidase, the last enzyme in the mitochondrial electron transport chain which drives oxidative phosphorylation. The respiratory chain contains 3 multisubunit complexes succinate dehydrogenase (complex II, CII), ubiquinol-cytochrome c oxidoreductase (cytochrome b-c1 complex, complex III, CIII) and cytochrome c oxidase (complex IV, CIV), that cooperate to transfer electrons derived from NADH and succinate to molecular oxygen, creating an electrochemical gradient over the inner membrane that drives transmembrane transport and the ATP synthase. Cytochrome c oxidase is the component of the respiratory chain that catalyzes the reduction of oxygen to water. Electrons originating from reduced cytochrome c in the intermembrane space (IMS) are transferred via the dinuclear copper A center (CU(A)) of Cox2 and heme A of Cox1 to the active site in Cox1, a binuclear center (BNC) formed by heme A3 and copper B (CU(B)). The BNC reduces molecular oxygen to 2 water molecules using 4 electrons from cytochrome c in the IMS and 4 protons from the mitochondrial matrix. The chain is Cytochrome c oxidase subunit 6, mitochondrial (cox-6) from Neurospora crassa (strain ATCC 24698 / 74-OR23-1A / CBS 708.71 / DSM 1257 / FGSC 987).